A 443-amino-acid polypeptide reads, in one-letter code: UDP-N-acetylmuramate--L-alanine ligase (443 aa).

110 to 116 (GAHGKTS) provides a ligand contact to ATP.

It belongs to the MurCDEF family.

Its subcellular location is the cytoplasm. It catalyses the reaction UDP-N-acetyl-alpha-D-muramate + L-alanine + ATP = UDP-N-acetyl-alpha-D-muramoyl-L-alanine + ADP + phosphate + H(+). It functions in the pathway cell wall biogenesis; peptidoglycan biosynthesis. In terms of biological role, cell wall formation. This chain is UDP-N-acetylmuramate--L-alanine ligase, found in Streptococcus suis (strain 98HAH33).